The primary structure comprises 347 residues: NADH-ubiquinone oxidoreductase chain 2 (347 aa).

10 helical membrane passes run 13–33, 59–79, 96–116, 122–142, 149–169, 178–198, 200–220, 240–260, 276–296, and 325–345; these read VILG…WIGF, YFFT…LNLM, MIMT…FWVP, IPLS…LTVL, INLT…GWGG, IMAY…IYNP, MTLL…MLFM, IVTI…LTGF, IILP…YMRL, and LLTP…MIII.

It belongs to the complex I subunit 2 family. In terms of assembly, core subunit of respiratory chain NADH dehydrogenase (Complex I) which is composed of 45 different subunits. Interacts with TMEM242.

The protein localises to the mitochondrion inner membrane. The catalysed reaction is a ubiquinone + NADH + 5 H(+)(in) = a ubiquinol + NAD(+) + 4 H(+)(out). Its function is as follows. Core subunit of the mitochondrial membrane respiratory chain NADH dehydrogenase (Complex I) which catalyzes electron transfer from NADH through the respiratory chain, using ubiquinone as an electron acceptor. Essential for the catalytic activity and assembly of complex I. The sequence is that of NADH-ubiquinone oxidoreductase chain 2 from Molossus ater (Black mastiff bat).